A 435-amino-acid polypeptide reads, in one-letter code: tRNA modification GTPase MnmE (435 aa).

Residues Arg-24, Glu-85, and Arg-124 each coordinate (6S)-5-formyl-5,6,7,8-tetrahydrofolate. Residues 220-361 (GLVFTIVGAP…LRTALAERAR (142 aa)) form the TrmE-type G domain. A K(+)-binding site is contributed by Asn-230. GTP is bound by residues 230–235 (NVGKSS), 249–255 (SAIAGTT), and 274–277 (DTAG). Position 234 (Ser-234) interacts with Mg(2+). The K(+) site is built by Ser-249, Ile-251, and Thr-254. Residue Thr-255 coordinates Mg(2+). Lys-435 contacts (6S)-5-formyl-5,6,7,8-tetrahydrofolate.

Belongs to the TRAFAC class TrmE-Era-EngA-EngB-Septin-like GTPase superfamily. TrmE GTPase family. As to quaternary structure, homodimer. Heterotetramer of two MnmE and two MnmG subunits. K(+) is required as a cofactor.

The protein localises to the cytoplasm. In terms of biological role, exhibits a very high intrinsic GTPase hydrolysis rate. Involved in the addition of a carboxymethylaminomethyl (cmnm) group at the wobble position (U34) of certain tRNAs, forming tRNA-cmnm(5)s(2)U34. The protein is tRNA modification GTPase MnmE of Gluconacetobacter diazotrophicus (strain ATCC 49037 / DSM 5601 / CCUG 37298 / CIP 103539 / LMG 7603 / PAl5).